A 1975-amino-acid chain; its full sequence is MATNGVYIVMGEANCVVALLNKARRQYQLSQVPTLEDTDPLLRNFTDLKEVLNEVADLADMNPQTYLSPFLDVIKAQNTNGPITEAALAAVAKFLNYGLIDASSIKAANAVESIAYAVVHTKFIGGKSTGSDECVLFKILQVLRSLLLSPPGILLSNEAVCDMMQSCFRIVFEQNLSLLLRKAAESTLADMTQLIFTRLPTFVEDTRHPYIRQLVNPTEKRQKRKKKRQLSVHIETKAKEPENVPTEMTKLIGEAAETAETDGAANLGYDVVLTTDPPVDTVTHPDPPIEEIIKLAEPISAGDEADSESEGGGGEEHHERPPVRAHAGLQREIVSDEEEIDTEQTVGGEEKMPYGLPCCRELLRFLITMTNPVDRHNTESMVILGLNLLIVALEAIADFLPNYDILMPLIKNELCRNLLQLLDTNRLPVLAATNRCCFLLFESMRMHMKFQLESYLKKLQSIVLTEEKQHENGGGGTEQKEMALESLVQLWRIPGLVTEMYLNFDCDLYCGNIFEDLTKLLVENSFPTVGGHTASLLSLDALLVVIETIEQNCEDRENGRGEVAKEQEHKDLKKLGLPVLSGYDLAKKMAISTGGKASPMPVSSSIVLRSNRHAPSTELPSMSQIIEQKKRKRLIAEGTELFNQSPKKGIAFLREKGILGHDEQSLVQWLRTNPQLDKKAIADYICNRKHAEVLNAFVKSFPFENTRLDVALRMFLETFRLPGESAEIALVMQHFSEEWFRANNEPFFHVDAAFTLSYAIIMLNVDQHNPQAKRSQPPMTVDCFRRNLSGTNDSRDFDPEMLADMYQAIKTEEIVMPAEQKGTVKEDYMWKVLLRRGETAEGSFYHAPTGWNDHDLFAVCWGPAVAALSYVFDKSEHEQILQKALTGYRKCAKIAAYYGMKEVFDNLCIHLCKFTTLTSMRDGGAGGGADEDVDLSAAALLSHSSSPEAVALAFGENHKAQLATRTLFYLVHENGNILREGWRNLFEALLQLFRARLLPAELTEVEDYVDEKGWVNIQRVHQKELPHTRNDSGLLSWFGLGGGASEADRRKPTQEQLSSMKLASQVISECRPSQIVADSKYLTSTSLAELLSSIAANSAQIVEQAEPQQKTASLSGEDEDALVFYLELIVAITLENKDRLPLVWPHVRRHLEWLLSPRFGRCPVLVERAVVGLLRVANRNLFRDNTVSDDVLHSLSMLLRLSPKALFIFSRQIAFGLYELIRANAANVHKKEHWAVLFALLEAAGAAVLPDDYVMMTTTEKQQQSLRVGGDQQQQRMAYSDVEGASGRGGGAHEERAYTSEGEERRRGGYDSNSDLESRVDSAGSLLGAQKQPADWIHLDHKDAAKATEEALTALGANVVSSKKNFRQFGSLVLRNGLGRHEPAAFLKVCECLAFLLRDAVHVTPDNFESSLQCLRTMVEASLDGGVYAAGPLSGDAQNRLRSNVTDEKAVKKHHHHHHGHKKKELCTDVTEDADESRNEEQQLIGNYQQMSLHLLDLCSQLHSQTPAIFAKWAQGASPAASDLATVAFIWTDIWRPLLQAIGRLSCDCRRGVRAAALTHLQRAFLPANMATLGAAEWQSCFGEVLFPLLTKLLEPFSQMDPIGMEDTRVRTLQIVAKTLLNHLSALSALDSFPDLWMLLLDYMEQYLRVDSCGNLNEAVPESLKNMLLVMDSTGIFAATPRLYDVTVERLNKFMPELIKDTIPNPPRPGQQQSEASEPKKEHASGLEPPPPSSNSTAATSTSDPSIATAQSSISTASSVVGPLVTCPEDAGISAPIPIQHPLTEVIVHSGPTSPIGSPPQTEPPASSPPQHQHSEHQQYEQYRQQQAAAAQQYQQYNQNYPQQQQQQQQQYAYSPEHAAYYQQQYAHQQQQYAEHYANQYQHYQQQQQQQQQHPVNPTSPSVHGQYSVANPLPLPAHPAYHPIVAPSVNSAFTHVYTPPQNNAPALAPSAPTTTSADSPYFTPIPYNPSQQEKP.

Disordered regions lie at residues 216 to 243 (NPTE…EPEN) and 299 to 352 (ISAG…EEKM). Positions 221 to 230 (RQKRKKKRQL) are enriched in basic residues. The SEC7 domain maps to 624 to 812 (QIIEQKKRKR…ADMYQAIKTE (189 aa)). Positions 1264-1277 (QSLRVGGDQQQQRM) are enriched in polar residues. Disordered regions lie at residues 1264 to 1318 (QSLR…DLES), 1447 to 1473 (DEKA…VTED), 1699 to 1751 (IKDT…ATAQ), 1788 to 1854 (VHSG…QYAY), and 1877 to 1975 (YANQ…QEKP). Residues 1291-1309 (GAHEERAYTSEGEERRRGG) show a composition bias toward basic and acidic residues. Residues 1451-1464 (VKKHHHHHHGHKKK) are compositionally biased toward basic residues. Residues 1734–1751 (SNSTAATSTSDPSIATAQ) show a composition bias toward low complexity. Residues 1797–1808 (GSPPQTEPPASS) show a composition bias toward pro residues. 2 stretches are compositionally biased toward low complexity: residues 1820 to 1854 (YEQY…QYAY) and 1877 to 1894 (YANQ…QQQH). Over residues 1895–1909 (PVNPTSPSVHGQYSV) the composition is skewed to polar residues. Positions 1938–1957 (TPPQNNAPALAPSAPTTTSA) are enriched in low complexity.

It is found in the golgi apparatus. Its subcellular location is the cis-Golgi network. It localises to the endoplasmic reticulum-Golgi intermediate compartment. In terms of biological role, guanine-nucleotide exchange factor (GEF) for members of the Arf family of small GTPases involved in trafficking in the early secretory pathway; its GEF activity initiates the coating of nascent vesicles via the localized generation of activated ARFs through replacement of GDP with GTP. Also, plays a role in receptor-mediated endocytosis in oocytes and endosomal trafficking. Involved in vesicle retrograde transport from the ERGIC and cis-Golgi compartments to the endoplasmic reticulum (ER). Plays a role in maintaining mitochondrial morphology, network organization and function. May be required for the basolateral cell membrane localization of the serine threonine protein kinase sgk-1 in intestinal cells. In Caenorhabditis elegans, this protein is Golgi-specific brefeldin A-resistance guanine nucleotide exchange factor 1 homolog.